Consider the following 233-residue polypeptide: Purine nucleoside phosphorylase DeoD-type (233 aa).

Position 4 (histidine 4) interacts with a purine D-ribonucleoside. Phosphate-binding positions include glycine 20, arginine 24, arginine 43, and 87–90 (RVGT). A purine D-ribonucleoside is bound by residues 178–180 (EME) and 202–203 (SD). Aspartate 203 acts as the Proton donor in catalysis.

The protein belongs to the PNP/UDP phosphorylase family. As to quaternary structure, homohexamer; trimer of homodimers.

The enzyme catalyses a purine D-ribonucleoside + phosphate = a purine nucleobase + alpha-D-ribose 1-phosphate. It carries out the reaction a purine 2'-deoxy-D-ribonucleoside + phosphate = a purine nucleobase + 2-deoxy-alpha-D-ribose 1-phosphate. Catalyzes the reversible phosphorolytic breakdown of the N-glycosidic bond in the beta-(deoxy)ribonucleoside molecules, with the formation of the corresponding free purine bases and pentose-1-phosphate. This Listeria monocytogenes serotype 4b (strain CLIP80459) protein is Purine nucleoside phosphorylase DeoD-type.